The sequence spans 510 residues: Probable inositol 3-phosphate synthase isozyme 3 (510 aa).

It belongs to the myo-inositol 1-phosphate synthase family. Requires NAD(+) as cofactor. Expressed in siliques, leaves, roots, seed endosperm, but not in embryos. Highest expression in roots. Confined to vascular tissue and hydathodes of leaves.

It localises to the cytoplasm. It catalyses the reaction D-glucose 6-phosphate = 1D-myo-inositol 3-phosphate. It participates in polyol metabolism; myo-inositol biosynthesis; myo-inositol from D-glucose 6-phosphate: step 1/2. In terms of biological role, key enzyme in myo-inositol biosynthesis pathway that catalyzes the conversion of glucose 6-phosphate to 1-myo-inositol 1-phosphate in a NAD-dependent manner. In Arabidopsis thaliana (Mouse-ear cress), this protein is Probable inositol 3-phosphate synthase isozyme 3 (IPS3).